The sequence spans 202 residues: Probable adenylyl-sulfate kinase (202 aa).

An ATP-binding site is contributed by 36-43 (GLSGSGKS). S110 functions as the Phosphoserine intermediate in the catalytic mechanism.

It belongs to the APS kinase family.

The enzyme catalyses adenosine 5'-phosphosulfate + ATP = 3'-phosphoadenylyl sulfate + ADP + H(+). It participates in sulfur metabolism; hydrogen sulfide biosynthesis; sulfite from sulfate: step 2/3. Catalyzes the synthesis of activated sulfate. The chain is Probable adenylyl-sulfate kinase from Halalkalibacterium halodurans (strain ATCC BAA-125 / DSM 18197 / FERM 7344 / JCM 9153 / C-125) (Bacillus halodurans).